The following is a 354-amino-acid chain: Selenide, water dikinase (354 aa).

C23 is an active-site residue. Residues K26 and 54–56 (TSD) contribute to the ATP site. D57 lines the Mg(2+) pocket. Residues D74, D97, and 145-147 (GHS) contribute to the ATP site. Residue D97 participates in Mg(2+) binding. D233 contributes to the Mg(2+) binding site.

Belongs to the selenophosphate synthase 1 family. Class I subfamily. In terms of assembly, homodimer. Requires Mg(2+) as cofactor.

The catalysed reaction is hydrogenselenide + ATP + H2O = selenophosphate + AMP + phosphate + 2 H(+). Its function is as follows. Synthesizes selenophosphate from selenide and ATP. This Burkholderia orbicola (strain MC0-3) protein is Selenide, water dikinase.